We begin with the raw amino-acid sequence, 271 residues long: Troponin T, fast skeletal muscle (271 aa).

Residues 1–21 (MSDEEVEHVEEEYEEEEEAQE) are compositionally biased toward acidic residues. Residues 1-74 (MSDEEVEHVE…EKVDFDDIQK (74 aa)) are disordered. The residue at position 2 (serine 2) is an N-acetylserine. Serine 2 is subject to Phosphoserine. 2 stretches are compositionally biased toward basic and acidic residues: residues 29 to 53 (EVHE…EKPR) and 62 to 74 (PEGE…DIQK). Serine 90 bears the Phosphoserine mark. Over residues 113-155 (RAERAEQQRIRAEKERERQNRLAEEKARREEEEAKRRAEDDLK) the composition is skewed to basic and acidic residues. Positions 113-192 (RAERAEQQRI…TAREMKKKVL (80 aa)) are disordered. Phosphoserine occurs at positions 161, 168, and 169. The span at 183 to 192 (TAREMKKKVL) shows a compositional bias: basic and acidic residues. Serine 205 is subject to Phosphoserine. Position 221 is a phosphotyrosine (tyrosine 221). Positions 249–271 (DQAQKHSKKAGTTPKGKVGGRWK) are disordered.

This sequence belongs to the troponin T family.

In terms of biological role, troponin T is the tropomyosin-binding subunit of troponin, the thin filament regulatory complex which confers calcium-sensitivity to striated muscle actomyosin ATPase activity. The polypeptide is Troponin T, fast skeletal muscle (TNNT3) (Sus scrofa (Pig)).